A 110-amino-acid polypeptide reads, in one-letter code: Phosphoribosyl-ATP pyrophosphatase (110 aa).

This sequence belongs to the PRA-PH family.

It localises to the cytoplasm. It catalyses the reaction 1-(5-phospho-beta-D-ribosyl)-ATP + H2O = 1-(5-phospho-beta-D-ribosyl)-5'-AMP + diphosphate + H(+). It functions in the pathway amino-acid biosynthesis; L-histidine biosynthesis; L-histidine from 5-phospho-alpha-D-ribose 1-diphosphate: step 2/9. This is Phosphoribosyl-ATP pyrophosphatase from Pseudomonas fluorescens (strain SBW25).